The following is a 373-amino-acid chain: Alanine racemase (373 aa).

Lys-35 acts as the Proton acceptor; specific for D-alanine in catalysis. N6-(pyridoxal phosphate)lysine is present on Lys-35. Arg-130 is a substrate binding site. Tyr-253 acts as the Proton acceptor; specific for L-alanine in catalysis. Residue Met-305 coordinates substrate.

This sequence belongs to the alanine racemase family. Pyridoxal 5'-phosphate is required as a cofactor.

The catalysed reaction is L-alanine = D-alanine. It participates in amino-acid biosynthesis; D-alanine biosynthesis; D-alanine from L-alanine: step 1/1. Catalyzes the interconversion of L-alanine and D-alanine. May also act on other amino acids. This is Alanine racemase (alr) from Cupriavidus necator (strain ATCC 17699 / DSM 428 / KCTC 22496 / NCIMB 10442 / H16 / Stanier 337) (Ralstonia eutropha).